Here is a 1710-residue protein sequence, read N- to C-terminus: Extracellular matrix protein A (1710 aa).

The N-terminal stretch at 1-22 (MKISIFILLLFISSMVIISVNA) is a signal peptide. Cys-rich CT repeat units follow at residues 43-70 (NRWS…CDDE), 71-94 (NACT…VDDK), 95-117 (NPCT…CDDK), 118-141 (NACT…CDDN), 142-165 (NPCT…VDDN), 166-189 (NPCT…VDDL), 190-213 (NPCT…VDDN), 214-237 (NKCT…CDDN), 238-261 (NACT…CDDK), 262-285 (NPCT…VDDN), 286-309 (NPCT…VDDN), 310-333 (NQCT…TDDN), 334-357 (NPCT…VDDN), 358-381 (NKCT…TDDN), 382-405 (NACT…CDDK), 406-429 (KACT…CDDN), 430-453 (NPCT…VDDN), 454-477 (NPCT…VDDN), 478-501 (NKCT…TDDN), 502-525 (NACT…CDDK), 526-549 (KACT…CDDN), 550-573 (NPCT…VDDN), 574-597 (NPCT…VDDN), 598-621 (NKCT…TDDN), 622-645 (NACT…CDDS), 646-669 (NPCT…VDDN), 670-693 (NPCT…VDDN), 694-717 (NKCT…TDDN), 718-741 (NACT…CDDK), 742-765 (KACT…CDDN), 766-789 (NPCT…VDDN), 790-813 (NPCT…VDDN), 814-837 (NKCT…TDDN), 838-861 (NACT…CDDN), 862-885 (NKCT…CDDS), 886-909 (NPCT…VDDN), 910-933 (NPCT…VDDN), 934-957 (NKCT…TDDN), 958-981 (NACT…TDDN), 982-1005 (NACT…CDDS), 1006-1029 (NPCT…VDDN), 1030-1053 (NPCT…VDDN), 1054-1077 (NKCT…TDDN), 1078-1101 (NACT…CDDS), 1102-1125 (NPCT…VDDN), 1126-1149 (NPCT…VDDN), 1150-1173 (NKCT…CDDN), 1174-1197 (NACT…CDDR), 1198-1221 (NPCT…TDDS), 1222-1245 (NKCT…CDDN), 1246-1269 (NACT…CDDK), 1270-1293 (NPCT…VDDN), 1294-1317 (DKCT…CDDN), 1318-1341 (NACT…CDDS), 1342-1365 (NPCT…VDDN), 1366-1389 (NPCT…VDDN), 1390-1413 (NKCT…CDDN), 1414-1437 (NPCT…VDDN), 1438-1461 (DACT…TDDN), 1462-1485 (NKCT…CDDG), 1486-1509 (NKCT…CPKP), 1511-1534 (DKCS…CTSD), 1558-1581 (NKCQ…CDDG), 1582-1606 (NACT…LPKN), 1608-1632 (NKCI…CECD), and 1658-1682 (NPKT…VITS). N-linked (GlcNAc...) asparagine glycans are attached at residues Asn-150 and Asn-151. 2 N-linked (GlcNAc...) asparagine glycosylation sites follow: Asn-270 and Asn-271. Asn-415 carries N-linked (GlcNAc...) asparagine glycosylation. Asn-535 carries an N-linked (GlcNAc...) asparagine glycan. N-linked (GlcNAc...) asparagine glycosylation is present at Asn-655. A glycan (N-linked (GlcNAc...) asparagine) is linked at Asn-751. N-linked (GlcNAc...) asparagine glycosylation is found at Asn-871, Asn-894, and Asn-895. Asn-1015 carries an N-linked (GlcNAc...) asparagine glycan. Residues Asn-1110 and Asn-1111 are each glycosylated (N-linked (GlcNAc...) asparagine). N-linked (GlcNAc...) asparagine glycosylation is present at Asn-1183. An N-linked (GlcNAc...) asparagine glycan is attached at Asn-1255. Asn-1351 carries N-linked (GlcNAc...) asparagine glycosylation. Residue Asn-1530 is glycosylated (N-linked (GlcNAc...) asparagine). Asn-1624 carries an N-linked (GlcNAc...) asparagine glycan.

It localises to the secreted. This is Extracellular matrix protein A (ecmA) from Dictyostelium discoideum (Social amoeba).